The primary structure comprises 346 residues: 4-hydroxy-2-oxovalerate aldolase (346 aa).

A Pyruvate carboxyltransferase domain is found at 8–260 (VILHDMSLRD…ETGIDLYKIM (253 aa)). 16–17 (RD) is a binding site for substrate. Asp-17 provides a ligand contact to Mn(2+). His-20 functions as the Proton acceptor in the catalytic mechanism. Substrate is bound by residues Ser-170 and His-199. Mn(2+) is bound by residues His-199 and His-201. Tyr-290 is a binding site for substrate.

This sequence belongs to the 4-hydroxy-2-oxovalerate aldolase family.

The catalysed reaction is (S)-4-hydroxy-2-oxopentanoate = acetaldehyde + pyruvate. It functions in the pathway aromatic compound metabolism; naphthalene degradation. This is 4-hydroxy-2-oxovalerate aldolase (nahM) from Pseudomonas putida (Arthrobacter siderocapsulatus).